The following is a 334-amino-acid chain: uncharacterized protein (334 aa).

The active-site Proton donor is the Y52. The tract at residues 314-334 (LPPPASPNSEPQVTGGCSSMC) is disordered. The segment covering 320–334 (PNSEPQVTGGCSSMC) has biased composition (polar residues).

It belongs to the aldo/keto reductase family.

The protein resides in the cytoplasm. Its subcellular location is the nucleus. This is an uncharacterized protein from Schizosaccharomyces pombe (strain 972 / ATCC 24843) (Fission yeast).